A 457-amino-acid chain; its full sequence is Argininosuccinate lyase (457 aa).

This sequence belongs to the lyase 1 family. Argininosuccinate lyase subfamily.

It localises to the cytoplasm. It carries out the reaction 2-(N(omega)-L-arginino)succinate = fumarate + L-arginine. It functions in the pathway amino-acid biosynthesis; L-arginine biosynthesis; L-arginine from L-ornithine and carbamoyl phosphate: step 3/3. In Staphylococcus carnosus (strain TM300), this protein is Argininosuccinate lyase.